The following is a 111-amino-acid chain: MAMPNFNDMMKQLQQAGAKMQDVQKQLEKITAVGDAGGGMVKATVSGKQKVLSIAIDPEILDDIEMVQDLVVAAVNAALEKAADLAREELSKAAGGMLGGEDMLKNFNIGQ.

It belongs to the YbaB/EbfC family. In terms of assembly, homodimer.

It localises to the cytoplasm. The protein localises to the nucleoid. Its function is as follows. Binds to DNA and alters its conformation. May be involved in regulation of gene expression, nucleoid organization and DNA protection. The polypeptide is Nucleoid-associated protein Cphamn1_1179 (Chlorobium phaeobacteroides (strain BS1)).